Reading from the N-terminus, the 154-residue chain is Myoglobin (154 aa).

One can recognise a Globin domain in the interval 2 to 148 (GLSDGEWQLV…FRNDMAAKYK (147 aa)). At Ser-4 the chain carries Phosphoserine. His-65 provides a ligand contact to nitrite. Residue His-65 participates in O2 binding. Residue Thr-68 is modified to Phosphothreonine. His-94 is a binding site for heme b.

The protein belongs to the globin family. In terms of assembly, monomeric.

It is found in the cytoplasm. It localises to the sarcoplasm. The enzyme catalyses Fe(III)-heme b-[protein] + nitric oxide + H2O = Fe(II)-heme b-[protein] + nitrite + 2 H(+). The catalysed reaction is H2O2 + AH2 = A + 2 H2O. Monomeric heme protein which primary function is to store oxygen and facilitate its diffusion within muscle tissues. Reversibly binds oxygen through a pentacoordinated heme iron and enables its timely and efficient release as needed during periods of heightened demand. Depending on the oxidative conditions of tissues and cells, and in addition to its ability to bind oxygen, it also has a nitrite reductase activity whereby it regulates the production of bioactive nitric oxide. Under stress conditions, like hypoxia and anoxia, it also protects cells against reactive oxygen species thanks to its pseudoperoxidase activity. This is Myoglobin (MB) from Lagothrix lagotricha (Brown woolly monkey).